The primary structure comprises 168 residues: Photosystem I assembly protein Ycf3 (168 aa).

TPR repeat units follow at residues 35-68, 72-105, and 120-153; these read AFTY…EIDP, SYIL…NPFL, and GEQA…TPGN.

Belongs to the Ycf3 family.

It localises to the plastid. The protein localises to the chloroplast thylakoid membrane. Essential for the assembly of the photosystem I (PSI) complex. May act as a chaperone-like factor to guide the assembly of the PSI subunits. This chain is Photosystem I assembly protein Ycf3, found in Phaseolus vulgaris (Kidney bean).